We begin with the raw amino-acid sequence, 249 residues long: DNA repair protein RecO (249 aa).

The protein belongs to the RecO family.

Functionally, involved in DNA repair and RecF pathway recombination. The protein is DNA repair protein RecO of Lactobacillus delbrueckii subsp. bulgaricus (strain ATCC BAA-365 / Lb-18).